The sequence spans 372 residues: Queuine tRNA-ribosyltransferase (372 aa).

The Proton acceptor role is filled by D89. Substrate contacts are provided by residues 89-93 (DSGGF), D161, and G232. The interval 262–268 (GIGDLPS) is RNA binding. Catalysis depends on D281, which acts as the Nucleophile. The interval 286–290 (TKAAR) is RNA binding; important for wobble base 34 recognition. Residues C319, C321, C324, and H351 each coordinate Zn(2+).

The protein belongs to the queuine tRNA-ribosyltransferase family. In terms of assembly, homodimer. Within each dimer, one monomer is responsible for RNA recognition and catalysis, while the other monomer binds to the replacement base PreQ1. Zn(2+) is required as a cofactor.

The catalysed reaction is 7-aminomethyl-7-carbaguanine + guanosine(34) in tRNA = 7-aminomethyl-7-carbaguanosine(34) in tRNA + guanine. Its pathway is tRNA modification; tRNA-queuosine biosynthesis. Functionally, catalyzes the base-exchange of a guanine (G) residue with the queuine precursor 7-aminomethyl-7-deazaguanine (PreQ1) at position 34 (anticodon wobble position) in tRNAs with GU(N) anticodons (tRNA-Asp, -Asn, -His and -Tyr). Catalysis occurs through a double-displacement mechanism. The nucleophile active site attacks the C1' of nucleotide 34 to detach the guanine base from the RNA, forming a covalent enzyme-RNA intermediate. The proton acceptor active site deprotonates the incoming PreQ1, allowing a nucleophilic attack on the C1' of the ribose to form the product. After dissociation, two additional enzymatic reactions on the tRNA convert PreQ1 to queuine (Q), resulting in the hypermodified nucleoside queuosine (7-(((4,5-cis-dihydroxy-2-cyclopenten-1-yl)amino)methyl)-7-deazaguanosine). This is Queuine tRNA-ribosyltransferase from Chlamydia trachomatis serovar A (strain ATCC VR-571B / DSM 19440 / HAR-13).